The chain runs to 1163 residues: Receptor-type guanylate cyclase gcy-21 (1163 aa).

A signal peptide spans 1–17 (MLSAVLLLLFFIQNVQN). At 18 to 490 (FDKIELEDIT…ENCGPPANNT (473 aa)) the chain is on the extracellular side. Asn102, Asn296, Asn322, Asn346, Asn466, and Asn488 each carry an N-linked (GlcNAc...) asparagine glycan. Residues 491 to 511 (FIIVISVGVAVLIGLAIAAAF) form a helical membrane-spanning segment. Over 512–1163 (LYKRYRYERR…QIQEKTYEFS (652 aa)) the chain is Cytoplasmic. The Protein kinase domain occupies 587–882 (FNTGSTARAG…QIKRKLKPLT (296 aa)). Residues 593–601 (ARAGPFGPI) and Lys635 contribute to the ATP site. Residues 901-930 (TDKLEKDIAERNEELEGEKAKSEALLKMML) are a coiled coil. A Guanylate cyclase domain is found at 953 to 1083 (TVFFSDCPGF…DTVNTASRME (131 aa)).

The protein belongs to the adenylyl cyclase class-4/guanylyl cyclase family. In terms of tissue distribution, expressed in ASG sensory neurons.

It is found in the cell membrane. It carries out the reaction GTP = 3',5'-cyclic GMP + diphosphate. In terms of biological role, guanylate cyclase involved in the production of the second messenger cGMP. Plays a role in dauer formation. The chain is Receptor-type guanylate cyclase gcy-21 from Caenorhabditis elegans.